Consider the following 348-residue polypeptide: Arginine kinase Oct f 2 (348 aa).

The 83-residue stretch at Met-1–Lys-83 folds into the Phosphagen kinase N-terminal domain. Gly-56 to Tyr-60 is a substrate binding site. A Phosphagen kinase C-terminal domain is found at Met-111–Ser-347. ATP-binding positions include Ser-114–Arg-118 and His-177. Glu-217 is a binding site for substrate. Arg-221 lines the ATP pocket. Residue Cys-263 coordinates substrate. ATP is bound by residues Arg-272 to His-276 and Arg-300 to Glu-305. Substrate is bound at residue Glu-305.

The protein belongs to the ATP:guanido phosphotransferase family. As to expression, muscle (at protein level).

It catalyses the reaction L-arginine + ATP = N(omega)-phospho-L-arginine + ADP + H(+). In terms of biological role, catalyzes the reversible transfer of high energy ATP gamma-phosphate group to L-arginine. The chain is Arginine kinase Oct f 2 from Amphioctopus fangsiao (Ocellated octopus).